The following is a 582-amino-acid chain: Formate--tetrahydrofolate ligase (582 aa).

Residue 65–72 (TPLGEGKT) coordinates ATP.

It belongs to the formate--tetrahydrofolate ligase family.

It catalyses the reaction (6S)-5,6,7,8-tetrahydrofolate + formate + ATP = (6R)-10-formyltetrahydrofolate + ADP + phosphate. Its pathway is one-carbon metabolism; tetrahydrofolate interconversion. This Vibrio parahaemolyticus serotype O3:K6 (strain RIMD 2210633) protein is Formate--tetrahydrofolate ligase.